The chain runs to 698 residues: Elongation factor G 1 (698 aa).

In terms of domain architecture, tr-type G spans Glu8–Ile290. GTP is bound by residues Ala17–Thr24, Asp88–His92, and Asn142–Asp145.

Belongs to the TRAFAC class translation factor GTPase superfamily. Classic translation factor GTPase family. EF-G/EF-2 subfamily.

Its subcellular location is the cytoplasm. Functionally, catalyzes the GTP-dependent ribosomal translocation step during translation elongation. During this step, the ribosome changes from the pre-translocational (PRE) to the post-translocational (POST) state as the newly formed A-site-bound peptidyl-tRNA and P-site-bound deacylated tRNA move to the P and E sites, respectively. Catalyzes the coordinated movement of the two tRNA molecules, the mRNA and conformational changes in the ribosome. This is Elongation factor G 1 from Shewanella denitrificans (strain OS217 / ATCC BAA-1090 / DSM 15013).